A 43-amino-acid chain; its full sequence is Bacteriocin mundticin (43 aa).

The cysteines at positions 9 and 14 are disulfide-linked.

Its function is as follows. This bacteriocin inhibits the growth of several Gram-positive bacteria, especially pathogenic L.monocytogenes and C.botulinum but has no effect on the growth of a number of yeasts and Gram-negative bacteria. The polypeptide is Bacteriocin mundticin (Enterococcus mundtii).